Consider the following 160-residue polypeptide: ATP synthase subunit b (160 aa).

The chain crosses the membrane as a helical span at residues 5–27 (IEQILTQIIAFLIMLGVLKKFVW).

It belongs to the ATPase B chain family. In terms of assembly, F-type ATPases have 2 components, F(1) - the catalytic core - and F(0) - the membrane proton channel. F(1) has five subunits: alpha(3), beta(3), gamma(1), delta(1), epsilon(1). F(0) has three main subunits: a(1), b(2) and c(10-14). The alpha and beta chains form an alternating ring which encloses part of the gamma chain. F(1) is attached to F(0) by a central stalk formed by the gamma and epsilon chains, while a peripheral stalk is formed by the delta and b chains.

It is found in the cell inner membrane. Its function is as follows. F(1)F(0) ATP synthase produces ATP from ADP in the presence of a proton or sodium gradient. F-type ATPases consist of two structural domains, F(1) containing the extramembraneous catalytic core and F(0) containing the membrane proton channel, linked together by a central stalk and a peripheral stalk. During catalysis, ATP synthesis in the catalytic domain of F(1) is coupled via a rotary mechanism of the central stalk subunits to proton translocation. In terms of biological role, component of the F(0) channel, it forms part of the peripheral stalk, linking F(1) to F(0). This Protochlamydia amoebophila (strain UWE25) protein is ATP synthase subunit b.